Here is a 316-residue protein sequence, read N- to C-terminus: Beta-ketoacyl-[acyl-carrier-protein] synthase III 1 (316 aa).

Residues Cys112 and His243 contribute to the active site. The interval 244–248 is ACP-binding; the sequence is QANYR. Asn273 is a catalytic residue.

The protein belongs to the thiolase-like superfamily. FabH family. As to quaternary structure, homodimer.

The protein localises to the cytoplasm. It carries out the reaction malonyl-[ACP] + acetyl-CoA + H(+) = 3-oxobutanoyl-[ACP] + CO2 + CoA. It participates in lipid metabolism; fatty acid biosynthesis. In terms of biological role, catalyzes the condensation reaction of fatty acid synthesis by the addition to an acyl acceptor of two carbons from malonyl-ACP. Catalyzes the first condensation reaction which initiates fatty acid synthesis and may therefore play a role in governing the total rate of fatty acid production. Possesses both acetoacetyl-ACP synthase and acetyl transacylase activities. Its substrate specificity determines the biosynthesis of branched-chain and/or straight-chain of fatty acids. The sequence is that of Beta-ketoacyl-[acyl-carrier-protein] synthase III 1 from Vibrio vulnificus (strain YJ016).